The following is a 560-amino-acid chain: Embryonal Fyn-associated substrate (560 aa).

In terms of domain architecture, SH3 spans T5–A68. Disordered regions lie at residues V176 to A219 and A241 to E372. Over residues A198–R210 the composition is skewed to basic and acidic residues. Position 253 is a phosphotyrosine; by SRC (Y253). Residues G259–P268 are compositionally biased toward pro residues. 2 consecutive short sequence motifs (SH3-binding) follow at residues R304–P310 and R334–P340. A compositionally biased stretch (low complexity) spans P305–P315. Basic and acidic residues predominate over residues P351–A361. The divergent helix-loop-helix motif stretch occupies residues F437–G487.

Belongs to the CAS family. Phosphorylated on multiple tyrosine residues. Phosphorylated on tyrosines by FYN and SRC. In terms of tissue distribution, widely expressed. Higher levels found in placenta and embryo. Lower levels found in brain, brainstem, muscle and lung. No expression in liver and intestine.

Functionally, docking protein which plays a central coordinating role for tyrosine-kinase-based signaling related to cell adhesion. May serve as an activator of SRC and a downstream effector. Interacts with the SH3 domain of FYN and with CRK, SRC, and YES. The protein is Embryonal Fyn-associated substrate (Efs) of Mus musculus (Mouse).